Consider the following 286-residue polypeptide: Oxidoreductase clz15 (286 aa).

It belongs to the asaB hydroxylase/desaturase family.

Its pathway is secondary metabolite biosynthesis. Oxidoreductase; part of the gene cluster that mediates the biosynthesis of squalestatin S1 (SQS1, also known as zaragozic acid A), a heavily oxidized fungal polyketide that offers potent cholesterol lowering activity by targeting squalene synthase (SS). SQS1 is composed of a 2,8-dioxobicyclic[3.2.1]octane-3,4,5-tricarboxyclic acid core that is connected to two lipophilic polyketide arms. These initial steps feature the priming of an unusual benzoic acid starter unit onto the highly reducing polyketide synthase clz14, followed by oxaloacetate extension and product release to generate a tricarboxylic acid containing product. The phenylalanine ammonia lyase (PAL) clz10 and the acyl-CoA ligase clz12 are involved in transforming phenylalanine into benzoyl-CoA. The citrate synthase-like protein clz17 is involved in connecting the C-alpha-carbons of the hexaketide chain and oxaloacetate to afford the tricarboxylic acid unit. The potential hydrolytic enzymes, clz11 and clz13, are in close proximity to pks2 and may participate in product release. On the other side, the tetraketide arm is synthesized by a the squalestatin tetraketide synthase clz2 and enzymatically esterified to the core in the last biosynthetic step, by the acetyltransferase clz6. The biosynthesis of the tetraketide must involve 3 rounds of chain extension. After the first and second rounds methyl-transfer occurs, and in all rounds of extension the ketoreductase and dehydratase are active. The enoyl reductase and C-MeT of clz2 are not active in the final round of extension. The acetyltransferase clz6 appears to have a broad substrate selectivity for its acyl CoA substrate, allowing the in vitro synthesis of novel squalestatins. The biosynthesis of SQS1 requires several oxidative steps likely performed by oxidoreductases clz3, clz15 and clz16. Finally, in support of the identification of the cluster as being responsible for SQS1 production, the cluster contains a gene encoding a putative squalene synthase (SS) clz20, suggesting a likely mechanism for self-resistance. The sequence is that of Oxidoreductase clz15 from Cochliobolus lunatus (Filamentous fungus).